The chain runs to 122 residues: Large ribosomal subunit protein bL12 (122 aa).

The protein belongs to the bacterial ribosomal protein bL12 family. As to quaternary structure, homodimer. Part of the ribosomal stalk of the 50S ribosomal subunit. Forms a multimeric L10(L12)X complex, where L10 forms an elongated spine to which 2 to 4 L12 dimers bind in a sequential fashion. Binds GTP-bound translation factors.

Its function is as follows. Forms part of the ribosomal stalk which helps the ribosome interact with GTP-bound translation factors. Is thus essential for accurate translation. This Cronobacter sakazakii (strain ATCC BAA-894) (Enterobacter sakazakii) protein is Large ribosomal subunit protein bL12.